A 500-amino-acid chain; its full sequence is NAD(P)H-quinone oxidoreductase subunit 2 A, chloroplastic (500 aa).

Transmembrane regions (helical) follow at residues 14 to 34 (LLLFDGSLIFPECILIFGLIL), 47 to 67 (IPWFYFISSTSLVMSITALLF), 89 to 109 (IFQFLILLCSTLSIPLSVEYI), 114 to 134 (MAITEFLLFILTATLGGMFLC), 139 to 159 (FITIFVAPECFSLCSYLLSGY), 173 to 193 (YLLMGGASSSILVHAFSWLYG), 217 to 237 (PGISIALIFITVGIGFKLSPA), 285 to 305 (WHLLLEILAILSMILGNLIAI), 313 to 333 (MLAYSSIGQIGYVIIGIIVGD), 344 to 364 (YMLFYISMNLGTFACIVLFGL), 385 to 405 (ALSLALCLLSLGGLPPLAGFF), 408 to 428 (LHLFWCGWQAGLSFLVSIGLL), and 474 to 494 (MIVCVIASTIPGISMNPIIAI).

This sequence belongs to the complex I subunit 2 family. In terms of assembly, NDH is composed of at least 16 different subunits, 5 of which are encoded in the nucleus.

It localises to the plastid. Its subcellular location is the chloroplast thylakoid membrane. It carries out the reaction a plastoquinone + NADH + (n+1) H(+)(in) = a plastoquinol + NAD(+) + n H(+)(out). The catalysed reaction is a plastoquinone + NADPH + (n+1) H(+)(in) = a plastoquinol + NADP(+) + n H(+)(out). Its function is as follows. NDH shuttles electrons from NAD(P)H:plastoquinone, via FMN and iron-sulfur (Fe-S) centers, to quinones in the photosynthetic chain and possibly in a chloroplast respiratory chain. The immediate electron acceptor for the enzyme in this species is believed to be plastoquinone. Couples the redox reaction to proton translocation, and thus conserves the redox energy in a proton gradient. In Pelargonium hortorum (Common geranium), this protein is NAD(P)H-quinone oxidoreductase subunit 2 A, chloroplastic.